A 383-amino-acid polypeptide reads, in one-letter code: Small ribosomal subunit protein mS31 (383 aa).

A mitochondrion-targeting transit peptide spans 1 to 21 (MLRSLCSIAVRLGGARQPRLL). Positions 158–187 (VNEAQIKLQEQRKALLNDVREKVEQEEVEE) form a coiled coil.

This sequence belongs to the mitochondrion-specific ribosomal protein mS31 family. In terms of assembly, component of the mitochondrial ribosome small subunit (28S) which comprises a 12S rRNA and about 30 distinct proteins.

The protein localises to the mitochondrion. The sequence is that of Small ribosomal subunit protein mS31 (mrps-31) from Caenorhabditis elegans.